The chain runs to 484 residues: Cathepsin F (484 aa).

The first 19 residues, 1-19 (MAPWLQLLSLLGLLPGAVA), serve as a signal peptide directing secretion. Positions 20-270 (APAQPRAASF…MKQAKSVGDL (251 aa)) are cleaved as a propeptide — activation peptide. N-linked (GlcNAc...) asparagine glycans are attached at residues Asn-160 and Asn-195. Intrachain disulfides connect Cys-292–Cys-333 and Cys-326–Cys-366. Cys-295 is a catalytic residue. Residues Asn-367 and Asn-378 are each glycosylated (N-linked (GlcNAc...) asparagine). Cys-424 and Cys-472 are joined by a disulfide. The active site involves His-431. N-linked (GlcNAc...) asparagine glycosylation occurs at Asn-440. Asn-451 is an active-site residue.

Belongs to the peptidase C1 family. In terms of tissue distribution, high expression levels in heart, skeletal muscle, brain, testis and ovary; moderate levels in prostate, placenta, liver and colon; and no detectable expression in peripheral leukocytes and thymus.

The protein localises to the lysosome. It carries out the reaction The recombinant enzyme cleaves synthetic substrates with Phe and Leu (better than Val) in P2, with high specificity constant (kcat/Km) comparable to that of cathepsin L.. Thiol protease which is believed to participate in intracellular degradation and turnover of proteins. Has also been implicated in tumor invasion and metastasis. The sequence is that of Cathepsin F (CTSF) from Homo sapiens (Human).